The primary structure comprises 352 residues: MSSRKIIHIDMDAFYASVELREQPHLKGRPVVVAWEGARSVICAASYEARQFGLHSAMSVATAKRLCPQAVYVPPHFDLYRQVSAQIHAVFRRYTDLIEPLSLDEAYLDVTRNFKNIPYASEVAKEIRAAIFAETGLTASAGIAPNKFLAKIASDWRKPNGQFVLPPHKVMAFLETLPLGKIPGVGKVTLKKMQSLGMQTAGDLRRFERGELLNHFGRYGYRLYDLARGTDERPVKAERECLQISTEITLPEDLPLEQAAGHLPHLAEDLWRQITRKNVEAQSVTLKLKTYDFRIITRTLTYSSVLPDCTALLQAAQMLMARVPPQTEDAFRLIGIGVGHLVPKNQQQDLWA.

Positions Ile6–Gly186 constitute a UmuC domain. Mg(2+) contacts are provided by Asp10 and Asp104. The active site involves Glu105.

It belongs to the DNA polymerase type-Y family. Monomer. The cofactor is Mg(2+).

The protein localises to the cytoplasm. It carries out the reaction DNA(n) + a 2'-deoxyribonucleoside 5'-triphosphate = DNA(n+1) + diphosphate. Functionally, poorly processive, error-prone DNA polymerase involved in untargeted mutagenesis. Copies undamaged DNA at stalled replication forks, which arise in vivo from mismatched or misaligned primer ends. These misaligned primers can be extended by PolIV. Exhibits no 3'-5' exonuclease (proofreading) activity. May be involved in translesional synthesis, in conjunction with the beta clamp from PolIII. This Neisseria meningitidis serogroup A / serotype 4A (strain DSM 15465 / Z2491) protein is DNA polymerase IV.